A 120-amino-acid chain; its full sequence is uncharacterized protein (120 aa).

The chain crosses the membrane as a helical span at residues 22–44 (ITVASCIGAAQGALFSIASALLL). Residue Asn114 is glycosylated (N-linked (GlcNAc...) asparagine).

It localises to the membrane. This is an uncharacterized protein from Saccharomyces cerevisiae (strain ATCC 204508 / S288c) (Baker's yeast).